A 140-amino-acid chain; its full sequence is Protein NrdI (140 aa).

The protein belongs to the NrdI family.

Functionally, probably involved in ribonucleotide reductase function. The chain is Protein NrdI from Photorhabdus laumondii subsp. laumondii (strain DSM 15139 / CIP 105565 / TT01) (Photorhabdus luminescens subsp. laumondii).